The sequence spans 316 residues: 4-hydroxy-3-methylbut-2-enyl diphosphate reductase (316 aa).

Position 12 (cysteine 12) interacts with [4Fe-4S] cluster. (2E)-4-hydroxy-3-methylbut-2-enyl diphosphate is bound by residues histidine 43 and histidine 81. Dimethylallyl diphosphate is bound by residues histidine 43 and histidine 81. The isopentenyl diphosphate site is built by histidine 43 and histidine 81. Cysteine 103 contributes to the [4Fe-4S] cluster binding site. Histidine 131 contributes to the (2E)-4-hydroxy-3-methylbut-2-enyl diphosphate binding site. Residue histidine 131 participates in dimethylallyl diphosphate binding. Histidine 131 is an isopentenyl diphosphate binding site. The active-site Proton donor is glutamate 133. (2E)-4-hydroxy-3-methylbut-2-enyl diphosphate is bound at residue threonine 170. Cysteine 198 contributes to the [4Fe-4S] cluster binding site. (2E)-4-hydroxy-3-methylbut-2-enyl diphosphate is bound by residues serine 226, asparagine 228, and serine 271. 3 residues coordinate dimethylallyl diphosphate: serine 226, asparagine 228, and serine 271. Positions 226, 228, and 271 each coordinate isopentenyl diphosphate.

This sequence belongs to the IspH family. [4Fe-4S] cluster serves as cofactor.

It catalyses the reaction isopentenyl diphosphate + 2 oxidized [2Fe-2S]-[ferredoxin] + H2O = (2E)-4-hydroxy-3-methylbut-2-enyl diphosphate + 2 reduced [2Fe-2S]-[ferredoxin] + 2 H(+). The catalysed reaction is dimethylallyl diphosphate + 2 oxidized [2Fe-2S]-[ferredoxin] + H2O = (2E)-4-hydroxy-3-methylbut-2-enyl diphosphate + 2 reduced [2Fe-2S]-[ferredoxin] + 2 H(+). Its pathway is isoprenoid biosynthesis; dimethylallyl diphosphate biosynthesis; dimethylallyl diphosphate from (2E)-4-hydroxy-3-methylbutenyl diphosphate: step 1/1. The protein operates within isoprenoid biosynthesis; isopentenyl diphosphate biosynthesis via DXP pathway; isopentenyl diphosphate from 1-deoxy-D-xylulose 5-phosphate: step 6/6. Its function is as follows. Catalyzes the conversion of 1-hydroxy-2-methyl-2-(E)-butenyl 4-diphosphate (HMBPP) into a mixture of isopentenyl diphosphate (IPP) and dimethylallyl diphosphate (DMAPP). Acts in the terminal step of the DOXP/MEP pathway for isoprenoid precursor biosynthesis. This chain is 4-hydroxy-3-methylbut-2-enyl diphosphate reductase, found in Geobacillus kaustophilus (strain HTA426).